Here is a 50-residue protein sequence, read N- to C-terminus: Large ribosomal subunit protein bL33A (50 aa).

The protein belongs to the bacterial ribosomal protein bL33 family.

In Mycoplasmopsis pulmonis (strain UAB CTIP) (Mycoplasma pulmonis), this protein is Large ribosomal subunit protein bL33A (rpmG1).